The sequence spans 1254 residues: Structural polyprotein (1254 aa).

The interval 1–33 (MFPFQPMYPMQPMPYRNPFAAPRRPWFPRTDPF) is necessary for nucleocapsid assembly and virus assembly. A host transcription inhibition region spans residues 33 to 68 (FLAMQVQELTRSMANLTFKQRRGAPPEGPPAKKSKR). Positions 41 to 48 (LTRSMANL) match the Supraphysiological nuclear export signal motif. A glycan (N-linked (GlcNAc...) asparagine; by host) is linked at Asn-47. The tract at residues 48-118 (LTFKQRRGAP…KKPGKRQRMV (71 aa)) is disordered. The Nuclear localization signal motif lies at 64–68 (KKSKR). Over residues 76–91 (GGQRKKKKNEGKKKAK) the composition is skewed to basic residues. The segment at 90-126 (AKTGPPNLKTQNGNKKKTNKKPGKRQRMVMKLESDKT) is binding to the viral RNA. Phosphothreonine is present on residues Thr-92 and Thr-107. Positions 103-117 (NKKKTNKKPGKRQRM) are enriched in basic residues. Residues 111–125 (PGKRQRMVMKLESDK) form a ribosome-binding region. Ser-123 is modified (phosphoserine). Positions 125-274 (KTFPIMLEGK…KYTPENCEQW (150 aa)) constitute a Peptidase S3 domain. Phosphothreonine is present on Thr-126. His-151 (charge relay system) is an active-site residue. Residues 167–172 (KKASKY) form an interaction with spike glycoprotein E2 region. Catalysis depends on charge relay system residues Asp-173 and Ser-225. Positions 259–263 (EKGVT) are interaction with spike glycoprotein E2. Residues 275–286 (SLVTTMCLLANV) are functions as an uncleaved signal peptide for the precursor of protein E3/E2. Residues 275 to 702 (SLVTTMCLLA…YHRYPMSTIT (428 aa)) are Extracellular-facing. Disulfide bonds link Cys-281-Cys-290, Cys-352-Cys-456, Cys-355-Cys-360, Cys-423-Cys-437, Cys-484-Cys-599, Cys-533-Cys-559, and Cys-535-Cys-553. N-linked (GlcNAc...) asparagine; by host glycosylation is present at Asn-285. Residues Asn-545 and Asn-651 are each glycosylated (N-linked (GlcNAc...) asparagine; by host). A helical transmembrane segment spans residues 703–723 (GLSICAAIVAVSIAASTWLLC). The interval 724 to 728 (RSRAS) is interaction with the capsid protein. Residues 724 to 756 (RSRASCLTPYRLTPNAKMPLCLAVLCCARSARA) lie on the Cytoplasmic side of the membrane. 3 S-palmitoyl cysteine; by host lipidation sites follow: Cys-729, Cys-749, and Cys-750. Cysteines 729 and 750 form a disulfide. Residues 735-754 (LTPNAKMPLCLAVLCCARSA) are transient transmembrane before p62-6K protein processing. Topologically, residues 757 to 768 (ETTWESLDHLWN) are extracellular. A helical transmembrane segment spans residues 769-789 (NNQQMFWTQLLIPLAALIVVT). A topological domain (cytoplasmic) is located at residue Arg-790. The chain crosses the membrane as a helical span at residues 791 to 811 (LLKCMCCVVPFLVVAGAAGAG). Residues 812–1224 (AYEHATTMPN…SKTAWTWLTS (413 aa)) are Extracellular-facing. 4 disulfides stabilise this stretch: Cys-861–Cys-926, Cys-874–Cys-906, Cys-875–Cys-908, and Cys-880–Cys-890. The tract at residues 896 to 913 (VYPFMWGGAYCFCDTENT) is E1 fusion peptide loop. N-linked (GlcNAc...) asparagine; by host glycosylation is found at Asn-946 and Asn-1082. 4 disulfide bridges follow: Cys-1071/Cys-1083, Cys-1113/Cys-1188, Cys-1118/Cys-1192, and Cys-1140/Cys-1182. The helical transmembrane segment at 1225–1245 (LLGGSAVIIIIGLVLATLVAM) threads the bilayer. Topologically, residues 1246–1254 (YVLTNQKHN) are cytoplasmic.

In terms of assembly, homodimer. Homomultimer. Interacts with host karyopherin KPNA4; this interaction allows the nuclear import of the viral capsid protein. Interacts with spike glycoprotein E2. Interacts with host IRAK1; the interaction leads to inhibition of IRAK1-dependent signaling. Part of a tetrameric complex composed of host CRM1, host importin alpha/beta dimer and the viral capsid; this complex blocks the receptor-mediated transport through the nuclear pore. Interacts with host phosphatase PPP1CA; this interaction dephosphorylates the capsid protein, which increases its ability to bind to the viral genome. The precursor of protein E3/E2 and E1 form a heterodimer shortly after synthesis. As to quaternary structure, interacts with spike glycoprotein E2. The precursor of protein E3/E2 and E1 form a heterodimer shortly after synthesis. Processing of the precursor of protein E3/E2 into E2 and E3 results in a heterodimer of the spike glycoproteins E2 and E1. Spike at virion surface are constituted of three E2-E1 heterodimers. After target cell attachment and endocytosis, E1 change conformation to form homotrimers. Interacts with 6K protein. Interacts with host LDLRAD3; this interaction mediates viral entry to the host cell. In terms of assembly, interacts with spike glycoprotein E1. Processing of the precursor of protein E3/E2 into E2 and E3 results in a heterodimer of the spike glycoproteins E2 and E1. Spike at virion surface are constituted of a trimer of E2-E1 heterodimers. Interacts with 6K protein. Interacts with host LDLRAD3; this interaction mediates viral entry to the host cell. Oligomer. Interacts with spike glycoprotein E1. Interacts with spike glycoprotein E2. Post-translationally, structural polyprotein: Specific enzymatic cleavages in vivo yield mature proteins. Capsid protein is auto-cleaved during polyprotein translation, unmasking a signal peptide at the N-terminus of the precursor of E3/E2. The remaining polyprotein is then targeted to the host endoplasmic reticulum, where host signal peptidase cleaves it into pE2, 6K and E1 proteins. pE2 is further processed to mature E3 and E2 by host furin in trans-Golgi vesicle. Phosphorylated on serine and threonine residues. In terms of processing, palmitoylated via thioester bonds. These palmitoylations may induce disruption of the C-terminus transmembrane. This would result in the reorientation of E2 C-terminus from lumenal to cytoplasmic side. Post-translationally, N-glycosylated. Palmitoylated via thioester bonds.

It localises to the virion. It is found in the host cytoplasm. The protein resides in the host cell membrane. Its subcellular location is the host nucleus. The protein localises to the virion membrane. It localises to the host Golgi apparatus. It is found in the host trans-Golgi network. The protein resides in the host endoplasmic reticulum. The catalysed reaction is Autocatalytic release of the core protein from the N-terminus of the togavirus structural polyprotein by hydrolysis of a -Trp-|-Ser- bond.. Functionally, forms an icosahedral capsid with a T=4 symmetry composed of 240 copies of the capsid protein surrounded by a lipid membrane through which penetrate 80 spikes composed of trimers of E1-E2 heterodimers. The capsid protein binds to the viral RNA genome at a site adjacent to a ribosome binding site for viral genome translation following genome release. Possesses a protease activity that results in its autocatalytic cleavage from the nascent structural protein. Following its self-cleavage, the capsid protein transiently associates with ribosomes, and within several minutes the protein binds to viral RNA and rapidly assembles into icosahedric core particles. The resulting nucleocapsid eventually associates with the cytoplasmic domain of the spike glycoprotein E2 at the cell membrane, leading to budding and formation of mature virions. In case of infection, new virions attach to target cells and after clathrin-mediated endocytosis their membrane fuses with the host endosomal membrane. This leads to the release of the nucleocapsid into the cytoplasm, followed by an uncoating event necessary for the genomic RNA to become accessible. The uncoating might be triggered by the interaction of capsid proteins with ribosomes. Binding of ribosomes would release the genomic RNA since the same region is genomic RNA-binding and ribosome-binding. Specifically inhibits interleukin-1 receptor-associated kinase 1/IRAK1-dependent signaling during viral entry, representing a means by which the alphaviruses may evade innate immune detection and activation prior to viral gene expression. Inhibits host transcription. Forms a tetrameric complex with XPO1/CRM1 and the nuclear import receptor importin. This complex blocks the central channel of host nuclear pores thereby inhibiting the receptor-mediated nuclear transport and thus the host mRNA and rRNA transcription. The inhibition of transcription is linked to a cytopathic effect on the host cell. Provides the signal sequence for the translocation of the precursor of protein E3/E2 to the host endoplasmic reticulum. Furin-cleaved E3 remains associated with spike glycoprotein E1 and mediates pH protection of the latter during the transport via the secretory pathway. After virion release from the host cell, the assembly protein E3 is gradually released in the extracellular space. In terms of biological role, plays a role in viral attachment to target host cell, by binding to the cell receptor LDLRAD3. Synthesized as a p62 precursor which is processed by furin at the cell membrane just before virion budding, giving rise to E2-E1 heterodimer. The p62-E1 heterodimer is stable, whereas E2-E1 is unstable and dissociate at low pH. p62 is processed at the last step, presumably to avoid E1 fusion activation before its final export to cell surface. E2 C-terminus contains a transitory transmembrane that would be disrupted by palmitoylation, resulting in reorientation of the C-terminal tail from lumenal to cytoplasmic side. This step is critical since E2 C-terminus is involved in budding by interacting with capsid proteins. This release of E2 C-terminus in cytoplasm occurs lately in protein export, and precludes premature assembly of particles at the endoplasmic reticulum membrane. Its function is as follows. Acts as a viroporin that participates in virus glycoprotein processing and transport to the plasma membrane, cell permeabilization and budding of viral particles. Disrupts the calcium homeostasis of the cell, probably at the endoplasmic reticulum level. This leads to cytoplasmic calcium elevation. Because of its lipophilic properties, the 6K protein is postulated to influence the selection of lipids that interact with the transmembrane domains of the glycoproteins, which, in turn, affects the deformability of the bilayer required for the extreme curvature that occurs as budding proceeds. Present in low amount in virions, about 3% compared to viral glycoproteins. Functionally, class II viral fusion protein. Fusion activity is inactive as long as E1 is bound to E2 in mature virion. After virus attachment to cell receptor LDLRAD3 and endocytosis, acidification of the endosome induce dissociation of E1/E2 heterodimer and concomitant trimerization of the E1 subunits. This E1 trimer is fusion active, and promotes release of viral nucleocapsid in cytoplasm after endosome and viral membrane fusion. Efficient fusion requires the presence of cholesterol and sphingolipid in the target membrane. The protein is Structural polyprotein of Venezuelan equine encephalitis virus (strain Everglades Fe3-7c) (VEEV).